A 276-amino-acid chain; its full sequence is Putative pyridoxine kinase (276 aa).

Residue Asn-139 coordinates ATP. Mg(2+) is bound at residue Glu-142. Residues 176 to 180 (KGGKA), Asp-188, Gly-213, and Lys-238 each bind ATP.

It belongs to the ThiD family.

It carries out the reaction pyridoxal + ATP = pyridoxal 5'-phosphate + ADP + H(+). In terms of biological role, phosphorylates B6 vitamers; functions in a salvage pathway. Uses pyridoxal, pyridoxine, and pyridoxamine as substrates. The chain is Putative pyridoxine kinase (pdxK) from Staphylococcus epidermidis (strain ATCC 12228 / FDA PCI 1200).